We begin with the raw amino-acid sequence, 219 residues long: Thiamine-phosphate synthase (219 aa).

4-amino-2-methyl-5-(diphosphooxymethyl)pyrimidine-binding positions include 44–48 (QFREK) and Asn79. The Mg(2+) site is built by Asp80 and Asp99. Ser117 serves as a coordination point for 4-amino-2-methyl-5-(diphosphooxymethyl)pyrimidine. 143–145 (TST) is a 2-[(2R,5Z)-2-carboxy-4-methylthiazol-5(2H)-ylidene]ethyl phosphate binding site. Lys146 is a binding site for 4-amino-2-methyl-5-(diphosphooxymethyl)pyrimidine. 2-[(2R,5Z)-2-carboxy-4-methylthiazol-5(2H)-ylidene]ethyl phosphate-binding positions include Gly175 and 195–196 (IS).

Belongs to the thiamine-phosphate synthase family. It depends on Mg(2+) as a cofactor.

It catalyses the reaction 2-[(2R,5Z)-2-carboxy-4-methylthiazol-5(2H)-ylidene]ethyl phosphate + 4-amino-2-methyl-5-(diphosphooxymethyl)pyrimidine + 2 H(+) = thiamine phosphate + CO2 + diphosphate. The catalysed reaction is 2-(2-carboxy-4-methylthiazol-5-yl)ethyl phosphate + 4-amino-2-methyl-5-(diphosphooxymethyl)pyrimidine + 2 H(+) = thiamine phosphate + CO2 + diphosphate. The enzyme catalyses 4-methyl-5-(2-phosphooxyethyl)-thiazole + 4-amino-2-methyl-5-(diphosphooxymethyl)pyrimidine + H(+) = thiamine phosphate + diphosphate. The protein operates within cofactor biosynthesis; thiamine diphosphate biosynthesis; thiamine phosphate from 4-amino-2-methyl-5-diphosphomethylpyrimidine and 4-methyl-5-(2-phosphoethyl)-thiazole: step 1/1. Functionally, condenses 4-methyl-5-(beta-hydroxyethyl)thiazole monophosphate (THZ-P) and 2-methyl-4-amino-5-hydroxymethyl pyrimidine pyrophosphate (HMP-PP) to form thiamine monophosphate (TMP). This chain is Thiamine-phosphate synthase, found in Bacillus cereus (strain AH820).